Reading from the N-terminus, the 292-residue chain is MPWLQLRINVTPEQAPAVESAALAAGAQAVTLEDNADQPIFEPALGETPLWSDTRITALFEADISTDETWQKVQNHYGEELPHHHWHVLEDKDWEREWIKNYHPIQCGPHFWICPSWLSPPDPNAINLLLDPGLAFGTGTHPTTFMCLEWLAQQDVKNLELIDYGCGSGILGIAGLLMGANSAVGVDIDPQALLATQENAVRNGLAKEAFPVFMPQRAPKEPVDMVLANILAGPLVELAPALIALVKSGGKICLSGVLGTQRTSIISAYEHAIEFTEVREKDEWICLAGIKK.

S-adenosyl-L-methionine-binding residues include threonine 144, glycine 165, aspartate 187, and asparagine 229.

The protein belongs to the methyltransferase superfamily. PrmA family.

The protein localises to the cytoplasm. It carries out the reaction L-lysyl-[protein] + 3 S-adenosyl-L-methionine = N(6),N(6),N(6)-trimethyl-L-lysyl-[protein] + 3 S-adenosyl-L-homocysteine + 3 H(+). Methylates ribosomal protein L11. This Saccharophagus degradans (strain 2-40 / ATCC 43961 / DSM 17024) protein is Ribosomal protein L11 methyltransferase.